The primary structure comprises 466 residues: tRNA dimethylallyltransferase 2 (466 aa).

Residue 27 to 34 (GPTGSGKS) participates in ATP binding. Substrate is bound at residue 29-34 (TGSGKS). Residues 52 to 55 (DAMQ) form an interaction with substrate tRNA region. Positions 433–466 (WEHHKQGRTHRKRTTRHKNSQTYKNREVQEAEVN) are disordered. The span at 437 to 451 (KQGRTHRKRTTRHKN) shows a compositional bias: basic residues. Basic and acidic residues predominate over residues 456–466 (KNREVQEAEVN).

It belongs to the IPP transferase family. Mg(2+) is required as a cofactor. As to expression, expressed ubiquitously, with highest expression in proliferating tissues.

The protein localises to the cytoplasm. The catalysed reaction is adenosine(37) in tRNA + dimethylallyl diphosphate = N(6)-dimethylallyladenosine(37) in tRNA + diphosphate. Catalyzes the transfer of a dimethylallyl group onto the adenine at position 37 in tRNAs that read codons beginning with uridine, leading to the formation of N6-(dimethylallyl)adenosine (i(6)A). Involved in the cis-type cytokinin biosynthesis. This chain is tRNA dimethylallyltransferase 2 (IPT2), found in Arabidopsis thaliana (Mouse-ear cress).